Reading from the N-terminus, the 139-residue chain is Small ribosomal subunit protein uS12 (139 aa).

Positions 1 to 55 (MPTINQLIRKGRKAKVKKSDSPALNKGYNSFKKVQTDLSSPQKRGVCTRVGTMTP) are disordered. Residues 32–42 (KKVQTDLSSPQ) are compositionally biased toward polar residues.

The protein belongs to the universal ribosomal protein uS12 family. Part of the 30S ribosomal subunit. Contacts proteins S8 and S17. May interact with IF1 in the 30S initiation complex.

Functionally, with S4 and S5 plays an important role in translational accuracy. Its function is as follows. Interacts with and stabilizes bases of the 16S rRNA that are involved in tRNA selection in the A site and with the mRNA backbone. Located at the interface of the 30S and 50S subunits, it traverses the body of the 30S subunit contacting proteins on the other side and probably holding the rRNA structure together. The combined cluster of proteins S8, S12 and S17 appears to hold together the shoulder and platform of the 30S subunit. The protein is Small ribosomal subunit protein uS12 of Halalkalibacterium halodurans (strain ATCC BAA-125 / DSM 18197 / FERM 7344 / JCM 9153 / C-125) (Bacillus halodurans).